The sequence spans 864 residues: MTDPAKTHTPMMQQYLAIKAEYPDTLVFYRMGDFYEVFFADAEKAARLLDITLTRRGQSGGEPVVMAGVPFHSLEGYLAKLIKLGESVAICEQVGDVATSKGPVERKVVRVVTPGTLTDTELLNDKAESILLAVHQGARNTCGLAWLSVTQGEIHLAHCANDELETWLARVNPSELLYNVDVTPAFEQRLKTQRCAASARPAWQFDGALGARRLLEQLKVASLASWNAEALNEAHAAASALLGYAEHTQGRALPHVQGLQVVRSGELIELPQSTRRNLELTQTLRGEDSPTLFSLLDTCSTGMGSRALKSWLLSPRRDRAQAQARLEAIAHLRSGPQQTLRARLKGCSDVERITARLALRQVRPRELVALRQTLDKLQQQSERAAGESIGLPELLTRIFEDLQPPPGCTELLGRYVLDEPAALIRDGGVINHGCDADLDELRAIQTNCDGFLLELEGRERARTGIANLRVQFNKVHGFYIEVTQGQLDKVPDDYRRRQTLKNAERYITPELKAFEDKALSAQERALAREKWLYEQLLDQLQAFIPALSRLARALASLDALCALAERSLTLNWAAPVFVKEPCIDITQGRHPVVEARLAETGGGSFIANDCSLSGKHRMQVITGPNMGGKSTYMRQVALIVLLASVGSYVPAARCRLGPIDAIHTRIGAADDVANAQSTFMLEMTEAAQILHTATPHSLVLMDEIGRGTSTFDGLALAGGIAAYLHNKTQAFTLFATHYFELTEFPAQHHGAINVHVSAVESGANIVFLHHIEPGPASKSYGIAVAKLAGVPSAVVTHARHALSALETQQTETRAQVDLFAAPPEAAAPVQTALDRALDTIDPDTLSPREALDALYQLKKLSALA.

Residue 623 to 630 (GPNMGGKS) coordinates ATP.

It belongs to the DNA mismatch repair MutS family.

This protein is involved in the repair of mismatches in DNA. It is possible that it carries out the mismatch recognition step. This protein has a weak ATPase activity. The polypeptide is DNA mismatch repair protein MutS (Polaromonas sp. (strain JS666 / ATCC BAA-500)).